The sequence spans 125 residues: Protein JAZ13 (125 aa).

Residues 6 to 10 (LDLHL) carry the EAR motif. Residues 99–125 (KKRSKSFTLTPNYTSSTSSSSSSLHNF) are disordered. Positions 112–125 (TSSTSSSSSSLHNF) are enriched in low complexity.

In terms of assembly, monomer. Lack of homodimerization, and very weak or no interaction with AFPH2/NINJA and other JAZ proteins. Interacts (via EAR motif) with TPL. Interacts (via jas motif) with MYC2. In terms of processing, phosphorylated at multiple serine residues.

In terms of biological role, non-TIFY functional repressor of jasmonate (JA)-mediated growth and defense responses. Intrinsically resistant to JA-induced turnover, probably due to the absence of the canonical degron that strongly interacts with COI1 in the presence of JA-Ile in the TIFY/JAZ proteins. The polypeptide is Protein JAZ13 (Arabidopsis thaliana (Mouse-ear cress)).